The primary structure comprises 493 residues: Aerolysin (493 aa).

Residues 1–23 form the signal peptide; sequence MQKIKLTGLSLIISGLLMAQAQA. 2 disulfides stabilise this stretch: cysteine 42-cysteine 98 and cysteine 182-cysteine 187. Residues 68–84 are interaction with host N-linked glycan; sequence WQISGLANGWVIMGPGY. The segment at 256–288 is part of the transmembrane beta-barrel after proteolytic activation of the toxin and insertion into the host membrane; the sequence is YGLSEKVTTKNKFKWPLVGETELSIEIAANQSW. Residues 346 to 355 form an interaction with glycans from host GPI-anchor region; the sequence is RWGGNAWYTH. Residues 446–493 constitute a propeptide that is removed on maturation; it reads AADSKVRRARSVDGAGQGLRLEIPLDAQELSGLGFNNVSLSVTPAANQ.

Belongs to the aerolysin family. In terms of assembly, homodimer in solution; homoheptamer in the host membrane. After binding to GPI-anchored proteins in target membranes and proteolytic removal of the C-terminal propeptide, the protein assembles into a heptameric pre-pore complex. A further conformation change leads to insertion into the host membrane. Post-translationally, proteolytic cleavage and subsequent release of the propeptide trigger a major conformation change, leading to the formation of a heptameric pre-pore that then inserts into the host membrane.

It is found in the secreted. It localises to the host cell membrane. Its function is as follows. Secreted, cytolytic toxin that forms pores in host membranes after proteolytic removal of a C-terminal propeptide, leading to destruction of the membrane permeability barrier and host cell death. The pores are formed by transmembrane beta-strands and are approximately 3 nm in diameter. The protein is Aerolysin (aerA) of Aeromonas hydrophila.